We begin with the raw amino-acid sequence, 296 residues long: Nucleotide-binding protein str0831 (296 aa).

13-20 contacts ATP; sequence GMSGAGKT. Residue 63 to 66 coordinates GTP; the sequence is DMRS.

The protein belongs to the RapZ-like family.

In terms of biological role, displays ATPase and GTPase activities. This Streptococcus thermophilus (strain CNRZ 1066) protein is Nucleotide-binding protein str0831.